The chain runs to 200 residues: Urease accessory protein UreE (200 aa).

The disordered stretch occupies residues 171–200 (HHGHAHPHPHDHDHQHGPGCAHGRHGHDHH).

The protein belongs to the UreE family.

It is found in the cytoplasm. In terms of biological role, involved in urease metallocenter assembly. Binds nickel. Probably functions as a nickel donor during metallocenter assembly. This chain is Urease accessory protein UreE, found in Burkholderia vietnamiensis (strain G4 / LMG 22486) (Burkholderia cepacia (strain R1808)).